A 317-amino-acid chain; its full sequence is Petrobactin-binding protein YclQ (317 aa).

The signal sequence occupies residues 1–19 (MKKFALLFIALVTAVVISA). A lipid anchor (N-palmitoyl cysteine) is attached at C20. A lipid anchor (S-diacylglycerol cysteine) is attached at C20. The Fe/B12 periplasmic-binding domain maps to 56 to 317 (KVVVFDFGSL…IKEVKDGLEK (262 aa)).

The protein belongs to the bacterial solute-binding protein 8 family. In terms of assembly, the complex is composed of two ATP-binding proteins (YclP), two transmembrane proteins (YclN and YclO) and a solute-binding protein (YclQ). Interacts with FloT.

The protein localises to the cell membrane. The protein resides in the membrane raft. Part of the ABC transporter complex YclNOPQ involved in uptake of ferric-petrobactin. Petrobactin is a photoreactive 3,4-catecholate siderophore produced by many members of the B.cereus group, including B.anthracis. Binds selectively iron-free and ferric petrobactin and the petrobactin precursor 3,4-dihydroxybenzoic acid (3,4-DHB). The chain is Petrobactin-binding protein YclQ (yclQ) from Bacillus subtilis (strain 168).